We begin with the raw amino-acid sequence, 207 residues long: Small ribosomal subunit protein uS4 (207 aa).

The tract at residues 31 to 55 (KCKLDSKPGQHGRTSGARTSDYGTQ) is disordered. The segment covering 42-53 (GRTSGARTSDYG) has biased composition (polar residues). In terms of domain architecture, S4 RNA-binding spans 97 to 160 (SRLDNVVYRM…KKQARIVEAL (64 aa)).

This sequence belongs to the universal ribosomal protein uS4 family. In terms of assembly, part of the 30S ribosomal subunit. Contacts protein S5. The interaction surface between S4 and S5 is involved in control of translational fidelity.

One of the primary rRNA binding proteins, it binds directly to 16S rRNA where it nucleates assembly of the body of the 30S subunit. In terms of biological role, with S5 and S12 plays an important role in translational accuracy. The chain is Small ribosomal subunit protein uS4 from Burkholderia thailandensis (strain ATCC 700388 / DSM 13276 / CCUG 48851 / CIP 106301 / E264).